Here is a 252-residue protein sequence, read N- to C-terminus: Probable aquaporin TIP1-2 (252 aa).

2 helical membrane passes run 24–44 (VAEFISMLIFVFAGSGSGMAF) and 57–77 (GLIAASLAHALALFVAVAVGA). Positions 85–87 (NPA) match the NPA 1 motif. The next 3 membrane-spanning stretches (helical) occupy residues 115–137 (VVACLLLKIATGGAAVGAFSLSA), 144–164 (AVVFEIVMTFGLVYTVYATAV), and 173–193 (VIAPIAIGFIVGANILAGGAF). Positions 199-201 (NPA) match the NPA 2 motif. The helical transmembrane segment at 220 to 240 (WLGPFVGAAIAALIYDIIFIG) threads the bilayer.

This sequence belongs to the MIP/aquaporin (TC 1.A.8) family. TIP (TC 1.A.8.10) subfamily. In terms of tissue distribution, expressed in leaves.

It localises to the vacuole membrane. Aquaporins facilitate the transport of water and small neutral solutes across cell membranes. May be involved in transport from the vacuolar compartment to the cytoplasm. This is Probable aquaporin TIP1-2 (TIP1-2) from Oryza sativa subsp. japonica (Rice).